Reading from the N-terminus, the 1057-residue chain is Diacylglycerol kinase iota (1057 aa).

Residues 15 to 59 (AARGPARAPAAAAAAAASPPGPCSGAACAPSAAAGAGAMNPSSSA) show a composition bias toward low complexity. Disordered regions lie at residues 15–74 (AARG…SSGS) and 334–358 (LKASNRKKKRTSFKRKASKRGMEQE). The segment covering 337 to 352 (SNRKKKRTSFKRKASK) has biased composition (basic residues). A DAGKc domain is found at 372 to 507 (PLMKPLLVFV…DRWNLHVERN (136 aa)). ANK repeat units follow at residues 950-979 (DHCSLLHYAAKTGNGEIVKYILDHGPSELL) and 986-1015 (TGETALHKAACQRNRAVCQLLVDAGASLRK). The segment covering 1014–1024 (RKTDSKGKTPQ) has biased composition (basic and acidic residues). The tract at residues 1014-1033 (RKTDSKGKTPQERAQQAGDP) is disordered. A PDZ-binding motif is present at residues 1055–1057 (TAV).

This sequence belongs to the eukaryotic diacylglycerol kinase family. Interacts (via PDZ-binding motif) with DLG4; controls the localization of DGKI to the synapse. Interacts (via PDZ-binding motif) with DLG1. Interacts (via PDZ-binding motif) with DLG2. Interacts (via PDZ-binding motif) with DLG3. May interact with RASGRP3; involved in the regulation of RASGRP3 activity. In terms of tissue distribution, specifically expressed in brain and retina. In brain, highly expressed in hippocampus, caudate nucleus, occipital pole, cerebral cortex, and cerebellum. Also detected in kidney.

The protein resides in the cell projection. Its subcellular location is the axon. It localises to the dendrite. It is found in the presynapse. The protein localises to the postsynapse. The protein resides in the postsynaptic density. Its subcellular location is the synaptic cell membrane. It localises to the cytoplasmic vesicle. It is found in the secretory vesicle. The protein localises to the synaptic vesicle membrane. The protein resides in the cytoplasm. Its subcellular location is the cytosol. It localises to the nucleus. The catalysed reaction is a 1,2-diacyl-sn-glycerol + ATP = a 1,2-diacyl-sn-glycero-3-phosphate + ADP + H(+). It carries out the reaction 1,2-di-(9Z-octadecenoyl)-sn-glycerol + ATP = 1,2-di-(9Z-octadecenoyl)-sn-glycero-3-phosphate + ADP + H(+). It catalyses the reaction 1-octadecanoyl-2-(5Z,8Z,11Z,14Z-eicosatetraenoyl)-sn-glycerol + ATP = 1-octadecanoyl-2-(5Z,8Z,11Z,14Z-eicosatetraenoyl)-sn-glycero-3-phosphate + ADP + H(+). The enzyme catalyses 1-octadecanoyl-2-(9Z,12Z)-octadecadienoyl-sn-glycerol + ATP = 1-octadecanoyl-2-(9Z,12Z-octadecadienoyl)-sn-glycero-3-phosphate + ADP + H(+). Its pathway is lipid metabolism; glycerolipid metabolism. In terms of biological role, diacylglycerol kinase that converts diacylglycerol/DAG into phosphatidic acid/phosphatidate/PA and regulates the respective levels of these two bioactive lipids. Thereby, acts as a central switch between the signaling pathways activated by these second messengers with different cellular targets and opposite effects in numerous biological processes. Has probably no preference for any of the diacylglycerols in terms of the acyl chain composition, especially for the acyl chain at the sn-2 position. By controlling the diacylglycerol/DAG-mediated activation of RASGRP3, negatively regulates the Rap1 signaling pathway. May play a role in presynaptic diacylglycerol/DAG signaling and control neurotransmitter release during metabotropic glutamate receptor-dependent long-term depression. In Homo sapiens (Human), this protein is Diacylglycerol kinase iota.